A 381-amino-acid polypeptide reads, in one-letter code: Glycerate kinase (381 aa).

The protein belongs to the glycerate kinase type-1 family.

The enzyme catalyses (R)-glycerate + ATP = (2R)-3-phosphoglycerate + ADP + H(+). This Bacillus cereus (strain ATCC 10987 / NRS 248) protein is Glycerate kinase (glxK).